Consider the following 491-residue polypeptide: 2,3-bisphosphoglycerate-independent phosphoglycerate mutase (491 aa).

Mn(2+) is bound by residues aspartate 11 and serine 61. Serine 61 acts as the Phosphoserine intermediate in catalysis. Substrate contacts are provided by residues histidine 118, 147–148 (RD), arginine 177, arginine 183, 248–251 (RSDR), and lysine 320. 5 residues coordinate Mn(2+): aspartate 386, histidine 390, aspartate 427, histidine 428, and histidine 445.

This sequence belongs to the BPG-independent phosphoglycerate mutase family. In terms of assembly, monomer. It depends on Mn(2+) as a cofactor.

It catalyses the reaction (2R)-2-phosphoglycerate = (2R)-3-phosphoglycerate. It participates in carbohydrate degradation; glycolysis; pyruvate from D-glyceraldehyde 3-phosphate: step 3/5. Catalyzes the interconversion of 2-phosphoglycerate and 3-phosphoglycerate. The chain is 2,3-bisphosphoglycerate-independent phosphoglycerate mutase from Sulfurimonas denitrificans (strain ATCC 33889 / DSM 1251) (Thiomicrospira denitrificans (strain ATCC 33889 / DSM 1251)).